Here is a 258-residue protein sequence, read N- to C-terminus: Pimeloyl-[acyl-carrier protein] methyl ester esterase (258 aa).

The AB hydrolase-1 domain occupies 16 to 244 (LVLVHGWGMN…QSSHAPFMTE (229 aa)). Residues Trp22, 82–83 (SL), and 146–150 (FMALQ) each bind substrate. Ser82 functions as the Nucleophile in the catalytic mechanism. Catalysis depends on residues Asp210 and His238. Substrate is bound at residue His238.

The protein belongs to the AB hydrolase superfamily. Carboxylesterase BioH family. Monomer.

The protein resides in the cytoplasm. The enzyme catalyses 6-carboxyhexanoyl-[ACP] methyl ester + H2O = 6-carboxyhexanoyl-[ACP] + methanol + H(+). It functions in the pathway cofactor biosynthesis; biotin biosynthesis. Its function is as follows. The physiological role of BioH is to remove the methyl group introduced by BioC when the pimeloyl moiety is complete. It allows to synthesize pimeloyl-ACP via the fatty acid synthetic pathway through the hydrolysis of the ester bonds of pimeloyl-ACP esters. This chain is Pimeloyl-[acyl-carrier protein] methyl ester esterase, found in Vibrio atlanticus (strain LGP32) (Vibrio splendidus (strain Mel32)).